The sequence spans 335 residues: HTH-type transcriptional regulator RipA (335 aa).

The region spanning R119–P216 is the HTH araC/xylS-type domain. 2 DNA-binding regions (H-T-H motif) span residues L136–T157 and I183–T206.

In terms of biological role, under iron limitation, represses the acn (aconitase), catA (catechol 1,2 dioxygenase), leuCD (isopropylmalate dehydratase), narKGHJI (nitrite/nitrate transporter and nitrate reductase), sdhCAB (succinate dehydrogenase), pta (phosphotransacetylase) and katA (catalase) genes. This Corynebacterium diphtheriae (strain ATCC 700971 / NCTC 13129 / Biotype gravis) protein is HTH-type transcriptional regulator RipA.